Reading from the N-terminus, the 714-residue chain is DNA ligase (714 aa).

Residues 48–52, 97–98, and Glu129 contribute to the NAD(+) site; these read DADYD and SL. Lys131 (N6-AMP-lysine intermediate) is an active-site residue. Positions 152, 189, 307, and 331 each coordinate NAD(+). 4 residues coordinate Zn(2+): Cys436, Cys439, Cys454, and Cys460. The 78-residue stretch at 637–714 folds into the BRCT domain; sequence KQDTAVAGKT…TEDEWLALIG (78 aa).

Belongs to the NAD-dependent DNA ligase family. LigA subfamily. It depends on Mg(2+) as a cofactor. The cofactor is Mn(2+).

It catalyses the reaction NAD(+) + (deoxyribonucleotide)n-3'-hydroxyl + 5'-phospho-(deoxyribonucleotide)m = (deoxyribonucleotide)n+m + AMP + beta-nicotinamide D-nucleotide.. Functionally, DNA ligase that catalyzes the formation of phosphodiester linkages between 5'-phosphoryl and 3'-hydroxyl groups in double-stranded DNA using NAD as a coenzyme and as the energy source for the reaction. It is essential for DNA replication and repair of damaged DNA. In Rhodopseudomonas palustris (strain BisB5), this protein is DNA ligase.